A 223-amino-acid polypeptide reads, in one-letter code: Glutelin-2 (223 aa).

The N-terminal stretch at 1–19 is a signal peptide; sequence MRVLLVALALLALAASATS. A run of 10 repeats spans residues 31–36, 37–42, 43–48, 49–54, 55–60, 61–66, 67–72, 73–78, 97–104, and 105–112. The segment at 31–78 is 8 X 6 AA tandem repeats of P-P-P-V-H-L; sequence PPPVHLPPPVHLPPPVHLPPPVHLPPPVHLPPPVHLPPPVHVPPPVHL. The segment at 97 to 112 is 2 X 8 AA tandem repeats of Q-P-H-P-C-P-C-Q; it reads QPHPCPCQQPHPSPCQ.

Belongs to the gliadin/glutenin family.

It localises to the vacuole. Its subcellular location is the aleurone grain membrane. Seed storage protein. It accounts for about 15% of the total endosperm protein content. The polypeptide is Glutelin-2 (Zea mays (Maize)).